A 289-amino-acid polypeptide reads, in one-letter code: 4-hydroxy-tetrahydrodipicolinate synthase (289 aa).

A pyruvate-binding site is contributed by Thr-44. Tyr-132 (proton donor/acceptor) is an active-site residue. The active-site Schiff-base intermediate with substrate is Lys-161. Residue Ile-201 participates in pyruvate binding.

It belongs to the DapA family. As to quaternary structure, homotetramer; dimer of dimers.

Its subcellular location is the cytoplasm. It carries out the reaction L-aspartate 4-semialdehyde + pyruvate = (2S,4S)-4-hydroxy-2,3,4,5-tetrahydrodipicolinate + H2O + H(+). It participates in amino-acid biosynthesis; L-lysine biosynthesis via DAP pathway; (S)-tetrahydrodipicolinate from L-aspartate: step 3/4. Its function is as follows. Catalyzes the condensation of (S)-aspartate-beta-semialdehyde [(S)-ASA] and pyruvate to 4-hydroxy-tetrahydrodipicolinate (HTPA). This is 4-hydroxy-tetrahydrodipicolinate synthase from Methanocaldococcus jannaschii (strain ATCC 43067 / DSM 2661 / JAL-1 / JCM 10045 / NBRC 100440) (Methanococcus jannaschii).